Reading from the N-terminus, the 115-residue chain is Large ribosomal subunit protein bL19 (115 aa).

Belongs to the bacterial ribosomal protein bL19 family.

In terms of biological role, this protein is located at the 30S-50S ribosomal subunit interface and may play a role in the structure and function of the aminoacyl-tRNA binding site. The sequence is that of Large ribosomal subunit protein bL19 from Bacillus licheniformis (strain ATCC 14580 / DSM 13 / JCM 2505 / CCUG 7422 / NBRC 12200 / NCIMB 9375 / NCTC 10341 / NRRL NRS-1264 / Gibson 46).